A 272-amino-acid chain; its full sequence is Indole-3-glycerol phosphate synthase (272 aa).

It belongs to the TrpC family.

The catalysed reaction is 1-(2-carboxyphenylamino)-1-deoxy-D-ribulose 5-phosphate + H(+) = (1S,2R)-1-C-(indol-3-yl)glycerol 3-phosphate + CO2 + H2O. The protein operates within amino-acid biosynthesis; L-tryptophan biosynthesis; L-tryptophan from chorismate: step 4/5. The polypeptide is Indole-3-glycerol phosphate synthase (Mycolicibacterium vanbaalenii (strain DSM 7251 / JCM 13017 / BCRC 16820 / KCTC 9966 / NRRL B-24157 / PYR-1) (Mycobacterium vanbaalenii)).